The following is a 72-amino-acid chain: Male-specific sperm protein Mst84Dd (72 aa).

Belongs to the MST(3)CGP family. Testis.

The protein is Male-specific sperm protein Mst84Dd (Mst84Dd) of Drosophila melanogaster (Fruit fly).